A 370-amino-acid chain; its full sequence is 4-hydroxy-3-methylbut-2-en-1-yl diphosphate synthase (flavodoxin) (370 aa).

[4Fe-4S] cluster is bound by residues Cys-270, Cys-273, Cys-305, and Glu-312.

The protein belongs to the IspG family. [4Fe-4S] cluster is required as a cofactor.

The catalysed reaction is (2E)-4-hydroxy-3-methylbut-2-enyl diphosphate + oxidized [flavodoxin] + H2O + 2 H(+) = 2-C-methyl-D-erythritol 2,4-cyclic diphosphate + reduced [flavodoxin]. The protein operates within isoprenoid biosynthesis; isopentenyl diphosphate biosynthesis via DXP pathway; isopentenyl diphosphate from 1-deoxy-D-xylulose 5-phosphate: step 5/6. Functionally, converts 2C-methyl-D-erythritol 2,4-cyclodiphosphate (ME-2,4cPP) into 1-hydroxy-2-methyl-2-(E)-butenyl 4-diphosphate. In Ectopseudomonas mendocina (strain ymp) (Pseudomonas mendocina), this protein is 4-hydroxy-3-methylbut-2-en-1-yl diphosphate synthase (flavodoxin).